The following is a 64-amino-acid chain: Large ribosomal subunit protein uL29 (64 aa).

The protein belongs to the universal ribosomal protein uL29 family.

In Burkholderia mallei (strain NCTC 10247), this protein is Large ribosomal subunit protein uL29.